We begin with the raw amino-acid sequence, 404 residues long: Probable RNA polymerase sigma-C factor (404 aa).

The Polymerase core binding signature appears at 193-206; sequence DLIQEGTLGLERAV. The segment at residues 362–381 is a DNA-binding region (H-T-H motif); the sequence is LSEIGRILNLSRERVRQIEA.

The protein belongs to the sigma-70 factor family.

Its function is as follows. Sigma factors are initiation factors that promote the attachment of RNA polymerase to specific initiation sites and are then released. This Synechocystis sp. (strain ATCC 27184 / PCC 6803 / Kazusa) protein is Probable RNA polymerase sigma-C factor (sigC).